The chain runs to 490 residues: Lysine--tRNA ligase (490 aa).

Mg(2+) is bound by residues E398 and E405.

Belongs to the class-II aminoacyl-tRNA synthetase family. Homodimer. Mg(2+) is required as a cofactor.

The protein localises to the cytoplasm. It carries out the reaction tRNA(Lys) + L-lysine + ATP = L-lysyl-tRNA(Lys) + AMP + diphosphate. The polypeptide is Lysine--tRNA ligase (Metamycoplasma arthritidis (strain 158L3-1) (Mycoplasma arthritidis)).